The sequence spans 402 residues: MTWDTKNQFETTKTSQELPATSQDHISDNKMNSEPSHRLSQFWSSLTRSSSESITAEPVVILGHTYREGDRDREGDSEVQKQVKKRYWMSYRSGFEPIKKHEDGPSPLSFVQSMIFNKNVGNTFANIHSLVDNDNFTTDVGWGCMIRTSQSVLANAIDRAGYEVDVELFADTSSAAFSLHNFVKVASDSPLRVRPGQWFGPSAASLSIKRLCEARNSSTNVPLSVLVCESGDIYDDQIQTFPVLLLLPLRLGIDHVNNVYHSSLLQLLEVPQSAGIAGGKPSSSLYFFGYQGTSLLYLDPHYPQNVSAGVGSYHSSSYQKLDISDMDPSMMAGIVLKNNEDYTDLKRRTTGNKIIHFHEARNYNDYVEVEREDFIDLGQNNRSATAGAEADFDSESSMVIVD.

Residues 1–38 (MTWDTKNQFETTKTSQELPATSQDHISDNKMNSEPSHR) form a disordered region. The active-site Nucleophile is the Cys-144. Residues Asp-299 and His-301 contribute to the active site.

It belongs to the peptidase C54 family.

The protein localises to the cytoplasm. It is found in the nucleus. The protein resides in the preautophagosomal structure. It carries out the reaction [protein]-C-terminal L-amino acid-glycyl-phosphatidylethanolamide + H2O = [protein]-C-terminal L-amino acid-glycine + a 1,2-diacyl-sn-glycero-3-phosphoethanolamine. Its function is as follows. Cysteine protease that plays a key role in cytoplasm to vacuole transport (Cvt) and autophagy by mediating both proteolytic activation and delipidation of ATG8. Required for selective autophagic degradation of the nucleus (nucleophagy) as well as for mitophagy which contributes to regulate mitochondrial quantity and quality by eliminating the mitochondria to a basal level to fulfill cellular energy requirements and preventing excess ROS production. The protease activity is required for proteolytic activation of ATG8: cleaves the C-terminal amino acid of ATG8 to reveal a C-terminal glycine. ATG8 ubiquitin-like activity requires the exposure of the glycine at the C-terminus for its conjugation to phosphatidylethanolamine (PE) and its insertion to membranes, which is necessary for autophagy. The ATG8-PE conjugate mediates tethering between adjacent membranes and stimulates membrane hemifusion, leading to expansion of the autophagosomal membrane during autophagy. In addition to the protease activity, also catalyzes deconjugation of PE-conjugated forms of ATG8 during macroautophagy: ATG8 delipidation is required to release the protein from membranes, which facilitates multiple events during macroautophagy, and especially for efficient autophagosome biogenesis, the assembly of ATG9-containing tubulovesicular clusters into phagophores/autophagosomes, and for the disassembly of PAS-associated ATG components. ATG8 delipidation by ATG4 also recycles ATG8-PE generated on inappropriate membranes to maintain a reservoir of unlipidated ATG8 that is required for autophagosome formation at the PAS. This Meyerozyma guilliermondii (strain ATCC 6260 / CBS 566 / DSM 6381 / JCM 1539 / NBRC 10279 / NRRL Y-324) (Yeast) protein is Probable cysteine protease ATG4 (ATG4).